The sequence spans 733 residues: Acyl-coenzyme A oxidase (733 aa).

Belongs to the acyl-CoA oxidase family. FAD is required as a cofactor.

The protein resides in the peroxisome. It carries out the reaction a 2,3-saturated acyl-CoA + O2 = a (2E)-enoyl-CoA + H2O2. The protein operates within lipid metabolism; peroxisomal fatty acid beta-oxidation. The chain is Acyl-coenzyme A oxidase (POX1) from Eremothecium gossypii (strain ATCC 10895 / CBS 109.51 / FGSC 9923 / NRRL Y-1056) (Yeast).